We begin with the raw amino-acid sequence, 3010 residues long: Probable polyketide synthase 2 (3010 aa).

The Ketosynthase family 3 (KS3) domain maps to 9-432 (SRDVAVIGIG…GSNACLLLSE (424 aa)). Catalysis depends on for beta-ketoacyl synthase activity residues cysteine 174, histidine 313, and histidine 353. An acyl/malonyl transferase region spans residues 629–662 (GINPSINVGHSFGEISSACCSGMLDLETACFIVY). Serine 639 functions as the For acyl/malonyl transferase activity in the catalytic mechanism. The segment at 944–1063 (ATQLGYRNDV…ARFSVLKHNS (120 aa)) is N-terminal hotdog fold. The 292-residue stretch at 944–1235 (ATQLGYRNDV…YSSISTDIKN (292 aa)) folds into the PKS/mFAS DH domain. Residue histidine 976 is the Proton acceptor; for dehydratase activity of the active site. The C-terminal hotdog fold stretch occupies residues 1080–1235 (NWTTIKRKEF…YSSISTDIKN (156 aa)). Aspartate 1146 functions as the Proton donor; for dehydratase activity in the catalytic mechanism. The Carrier domain occupies 2482-2559 (DNELSIRDDI…QLIQAVIQAV (78 aa)). At serine 2519 the chain carries O-(pantetheine 4'-phosphoryl)serine.

The cofactor is pantetheine 4'-phosphate.

Probable polyketide synthase. This is Probable polyketide synthase 2 (pks2) from Dictyostelium discoideum (Social amoeba).